An 872-amino-acid chain; its full sequence is Chaperone protein ClpB 2 (872 aa).

The Clp R domain maps to 6–148 (PNQFTEKAWE…KNIIKQVRGS (143 aa)). Repeat regions lie at residues 9–73 (FTEK…IQRQ) and 85–148 (LGRS…VRGS). Residues 161-342 (QSLEKYGRDL…RRFQQVYVDQ (182 aa)) are NBD1. Position 208 to 215 (208 to 215 (GEPGVGKT)) interacts with ATP. The segment at 343-551 (PSVEDTISIL…IAEIISKWTG (209 aa)) is linker. A coiled-coil region spans residues 393–527 (IDLVDEAAAR…TERELSQTQG (135 aa)). The segment at 561–772 (EKEKLLHLED…RIDEVIIFHS (212 aa)) is NBD2. 611-618 (GPTGVGKT) contributes to the ATP binding site. Residues 773-872 (LDKKELRQIV…SRLPVEVFSS (100 aa)) are C-terminal.

The protein belongs to the ClpA/ClpB family. Homohexamer. The oligomerization is ATP-dependent.

It is found in the cytoplasm. Its function is as follows. Part of a stress-induced multi-chaperone system, it is involved in the recovery of the cell from heat-induced damage, in cooperation with DnaK, DnaJ and GrpE. Acts before DnaK, in the processing of protein aggregates. Protein binding stimulates the ATPase activity; ATP hydrolysis unfolds the denatured protein aggregates, which probably helps expose new hydrophobic binding sites on the surface of ClpB-bound aggregates, contributing to the solubilization and refolding of denatured protein aggregates by DnaK. The polypeptide is Chaperone protein ClpB 2 (clpB2) (Nostoc sp. (strain PCC 7120 / SAG 25.82 / UTEX 2576)).